We begin with the raw amino-acid sequence, 143 residues long: Nucleoside diphosphate kinase (143 aa).

Residues K11, F59, R87, T93, R104, and N114 each contribute to the ATP site. H117 (pros-phosphohistidine intermediate) is an active-site residue.

Belongs to the NDK family. As to quaternary structure, homotetramer. The cofactor is Mg(2+).

Its subcellular location is the cytoplasm. It carries out the reaction a 2'-deoxyribonucleoside 5'-diphosphate + ATP = a 2'-deoxyribonucleoside 5'-triphosphate + ADP. The catalysed reaction is a ribonucleoside 5'-diphosphate + ATP = a ribonucleoside 5'-triphosphate + ADP. Major role in the synthesis of nucleoside triphosphates other than ATP. The ATP gamma phosphate is transferred to the NDP beta phosphate via a ping-pong mechanism, using a phosphorylated active-site intermediate. The chain is Nucleoside diphosphate kinase from Shewanella sp. (strain ANA-3).